Consider the following 510-residue polypeptide: Thermostable carboxypeptidase 1 (510 aa).

The 504-residue stretch at 3 to 506 (PEAAYQNLLE…FLAYLEKKYA (504 aa)) folds into the Peptidase M32 domain. The HPF motif lies at 245–247 (HPF). Positions 255-259 (DVRIT) match the DXRXT motif. His276 lines the Zn(2+) pocket. The HEXXH signature appears at 276-280 (HEMGH). Glu277 acts as the Proton donor/acceptor in catalysis. Zn(2+) is bound by residues His280 and Glu306. The short motif at 305–308 (HESQ) is the HES/GQ element. An I/NRXXA/SD motif is present at residues 357–362 (IRVEAD). The GXXQDXHW signature appears at 412–419 (GVMQDVHW).

This sequence belongs to the peptidase M32 family. In terms of assembly, homodimer. Zn(2+) is required as a cofactor.

The enzyme catalyses Release of a C-terminal amino acid with broad specificity, except for -Pro.. Its function is as follows. Broad specificity carboxypetidase that releases amino acids sequentially from the C-terminus, including neutral, aromatic, polar and basic residues, but not Pro. Has lower activity with substrates ending with Gly or Glu. The sequence is that of Thermostable carboxypeptidase 1 from Thermus thermophilus (strain ATCC 27634 / DSM 579 / HB8).